Reading from the N-terminus, the 309-residue chain is Taste receptor type 2 member 20 (309 aa).

Over 1-6 (MMSFLH) the chain is Extracellular. The helical transmembrane segment at 7-27 (IVFSILVVVAFILGNFANGFI) threads the bilayer. Topologically, residues 28–46 (ALINFIAWVKRQKISSADQ) are cytoplasmic. Residues 47–67 (IIAALAVSRVGLLWVILLHWY) traverse the membrane as a helical segment. At 68–79 (STVLNPTSSNLK) the chain is on the extracellular side. The helical transmembrane segment at 80-100 (VIIFISNAWAVTNHFSIWLAT) threads the bilayer. Residues 101–125 (SLSIFYLLKIVNFSRLIFHHLKRKA) lie on the Cytoplasmic side of the membrane. Residues 126 to 146 (KSVVLVIVLGSLFFLVCHLVM) form a helical membrane-spanning segment. Residues 147–178 (KHTYINVWTEECEGNVTWKIKLRNAMHLSNLT) are Extracellular-facing. 2 N-linked (GlcNAc...) asparagine glycosylation sites follow: Asn161 and Asn176. The chain crosses the membrane as a helical span at residues 179–199 (VAMLANLIPFTLTLISFLLLI). At 200 to 229 (YSLCKHLKKMQLHGKGSQDPSTKIHIKALQ) the chain is on the cytoplasmic side. Residues 230-250 (TVTSFLILLAIYFLCLIISFW) traverse the membrane as a helical segment. The Extracellular portion of the chain corresponds to 251-259 (NFKMRPKEI). A helical membrane pass occupies residues 260–280 (VLMLCQAFGIIYPSFHSFILI). Over 281-309 (WGNKTLKQTFLSVLWQVTCWAKGQNQSTP) the chain is Cytoplasmic.

Belongs to the G-protein coupled receptor T2R family. In terms of tissue distribution, expressed in subsets of taste receptor cells of the tongue and exclusively in gustducin-positive cells.

The protein localises to the membrane. Its function is as follows. Receptor that may play a role in the perception of bitterness and is gustducin-linked. May play a role in sensing the chemical composition of the gastrointestinal content. The activity of this receptor may stimulate alpha gustducin, mediate PLC-beta-2 activation and lead to the gating of TRPM5. The protein is Taste receptor type 2 member 20 (TAS2R20) of Homo sapiens (Human).